The sequence spans 412 residues: Putative competence-damage inducible protein (412 aa).

Belongs to the CinA family.

This is Putative competence-damage inducible protein from Bacillus cereus (strain G9842).